The chain runs to 818 residues: SIT4-associating protein SAP4 (818 aa).

Disordered regions lie at residues 33 to 60 (ETSS…RDRS) and 499 to 526 (TSNT…KNIK). The segment covering 509-518 (NNDSNDSNDN) has biased composition (low complexity).

It belongs to the SAPS family. Post-translationally, hyperphosphorylated in the absence of SIT4.

Its function is as follows. Associates with the SIT4 phosphatase in a cell cycle dependent manner. May be directly or indirectly involved in SIT4-dependent functions in budding and in normal G1 cyclin expression. The sequence is that of SIT4-associating protein SAP4 (SAP4) from Saccharomyces cerevisiae (strain ATCC 204508 / S288c) (Baker's yeast).